A 202-amino-acid polypeptide reads, in one-letter code: Matrix protein (202 aa).

Residues 35-38 (PPEY) carry the PPXY motif motif. Residues 115 to 151 (KLRRTLIFQWADSRGPLEGEELEYSQEITWDDDTEFV) are essential for glycoprotein binding.

It belongs to the lyssavirus matrix protein family. Homomultimer. Interacts with nucleoprotein and with the cytoplasmic domain of glycoprotein. Interacts with host ATP6V1A; this interaction plays an important role in virion uncoating after viral entry.

The protein resides in the virion membrane. Its subcellular location is the host endomembrane system. The protein localises to the host cytoplasm. In terms of biological role, plays a major role in assembly, budding and uncoating of virion after membrane fusion. Completely covers the ribonucleoprotein coil and keep it in condensed bullet-shaped form. Inhibits viral transcription and stimulates replication. Plays a major role in early induction of TRAIL-mediated apoptosis in infected neurons. Inhibits the integrated stress response (ISR) in the infected cell by blocking the formation of stress granules. The sequence is that of Matrix protein (M) from Rabies virus (strain CVS-11) (RABV).